A 122-amino-acid polypeptide reads, in one-letter code: Large ribosomal subunit protein bL12 (122 aa).

Belongs to the bacterial ribosomal protein bL12 family. In terms of assembly, homodimer. Part of the ribosomal stalk of the 50S ribosomal subunit. Forms a multimeric L10(L12)X complex, where L10 forms an elongated spine to which 2 to 4 L12 dimers bind in a sequential fashion. Binds GTP-bound translation factors.

Its function is as follows. Forms part of the ribosomal stalk which helps the ribosome interact with GTP-bound translation factors. Is thus essential for accurate translation. This chain is Large ribosomal subunit protein bL12, found in Levilactobacillus brevis (strain ATCC 367 / BCRC 12310 / CIP 105137 / JCM 1170 / LMG 11437 / NCIMB 947 / NCTC 947) (Lactobacillus brevis).